A 143-amino-acid polypeptide reads, in one-letter code: Ribosome maturation factor RimP (143 aa).

This sequence belongs to the RimP family.

It localises to the cytoplasm. In terms of biological role, required for maturation of 30S ribosomal subunits. The protein is Ribosome maturation factor RimP of Borrelia hermsii (strain HS1 / DAH).